Reading from the N-terminus, the 151-residue chain is MTKTITPSSQGLDQKWYVIDATDQRLGRLACEVAKILRGKNKPTYTPHMDTGDFVIIINADKVAVTGRKSTQKLYRRHSGRPGGMKIETFEKLQQRIPERIIEKAVKGMLPKNALGRQLFTKLKVYPGPNHPHQAQKPEELTLNTIPNGDK.

A disordered region spans residues 126–151; it reads YPGPNHPHQAQKPEELTLNTIPNGDK. Positions 142-151 are enriched in polar residues; sequence TLNTIPNGDK.

Belongs to the universal ribosomal protein uL13 family. In terms of assembly, part of the 50S ribosomal subunit.

This protein is one of the early assembly proteins of the 50S ribosomal subunit, although it is not seen to bind rRNA by itself. It is important during the early stages of 50S assembly. This Crocosphaera subtropica (strain ATCC 51142 / BH68) (Cyanothece sp. (strain ATCC 51142)) protein is Large ribosomal subunit protein uL13.